We begin with the raw amino-acid sequence, 437 residues long: Phosphatidylserine decarboxylase proenzyme 1, mitochondrial (437 aa).

The N-terminal 18 residues, 1–18, are a transit peptide targeting the mitochondrion; it reads MLKFHRNVKPQFGAFARY. Residues 19–38 lie on the Mitochondrial matrix side of the membrane; sequence SSLGKHNSRKRVGIIRLAYG. Residues 39–57 traverse the membrane as a helical segment; sequence LTGIGLVGLAGFAWAQDRH. Residues 58–437 are Mitochondrial intermembrane-facing; the sequence is EKTYQKKGVQ…PLGRVVPSSH (380 aa). Catalysis depends on charge relay system; for autoendoproteolytic cleavage activity residues Asp-157, His-287, and Ser-401. Residue Ser-401 is the Schiff-base intermediate with substrate; via pyruvic acid; for decarboxylase activity of the active site. Ser-401 carries the pyruvic acid (Ser); by autocatalysis modification.

Belongs to the phosphatidylserine decarboxylase family. PSD-B subfamily. Eukaryotic type I sub-subfamily. In terms of assembly, heterodimer of a large membrane-associated beta subunit and a small pyruvoyl-containing alpha subunit. The cofactor is pyruvate. Is synthesized initially as an inactive proenzyme. Formation of the active enzyme involves a self-maturation process in which the active site pyruvoyl group is generated from an internal serine residue via an autocatalytic post-translational modification. Two non-identical subunits are generated from the proenzyme in this reaction, and the pyruvate is formed at the N-terminus of the alpha chain, which is derived from the carboxyl end of the proenzyme. The autoendoproteolytic cleavage occurs by a canonical serine protease mechanism, in which the side chain hydroxyl group of the serine supplies its oxygen atom to form the C-terminus of the beta chain, while the remainder of the serine residue undergoes an oxidative deamination to produce ammonia and the pyruvoyl prosthetic group on the alpha chain. During this reaction, the Ser that is part of the protease active site of the proenzyme becomes the pyruvoyl prosthetic group, which constitutes an essential element of the active site of the mature decarboxylase.

The protein resides in the mitochondrion. It is found in the mitochondrion inner membrane. The catalysed reaction is a 1,2-diacyl-sn-glycero-3-phospho-L-serine + H(+) = a 1,2-diacyl-sn-glycero-3-phosphoethanolamine + CO2. It participates in phospholipid metabolism; phosphatidylethanolamine biosynthesis; phosphatidylethanolamine from CDP-diacylglycerol: step 2/2. Functionally, catalyzes the formation of phosphatidylethanolamine (PtdEtn) from phosphatidylserine (PtdSer). Plays a central role in phospholipid metabolism and in the interorganelle trafficking of phosphatidylserine. Together with psd2 and psd3, responsible for the majority of phosphatidylethanolamine synthesis. This chain is Phosphatidylserine decarboxylase proenzyme 1, mitochondrial, found in Schizosaccharomyces pombe (strain 972 / ATCC 24843) (Fission yeast).